The following is a 336-amino-acid chain: Fructose-1,6-bisphosphatase class 1 (336 aa).

Mg(2+)-binding residues include glutamate 90, aspartate 112, leucine 114, and aspartate 115. Substrate is bound by residues 115-118, asparagine 207, and lysine 273; that span reads DGSS. Glutamate 279 provides a ligand contact to Mg(2+).

It belongs to the FBPase class 1 family. In terms of assembly, homotetramer. Requires Mg(2+) as cofactor.

It localises to the cytoplasm. The enzyme catalyses beta-D-fructose 1,6-bisphosphate + H2O = beta-D-fructose 6-phosphate + phosphate. It functions in the pathway carbohydrate biosynthesis; gluconeogenesis. In Xanthomonas oryzae pv. oryzae (strain PXO99A), this protein is Fructose-1,6-bisphosphatase class 1.